A 502-amino-acid polypeptide reads, in one-letter code: RNA polymerase sigma factor sigA (502 aa).

A chloroplast-targeting transit peptide spans 1 to 23; it reads MATAAVIGLNTGKRLLSSSFYHS. Positions 57 to 71 are enriched in polar residues; sequence YSPSFPSSNRHTQSA. Positions 57–92 are disordered; the sequence is YSPSFPSSNRHTQSAKALKESVDVASTEKPWLPNGT. At Thr170 the chain carries Phosphothreonine. Positions 287 to 300 match the Polymerase core binding motif; sequence DLVQGGLIGLLRGI. Positions 461 to 480 form a DNA-binding region, H-T-H motif; the sequence is WEDISKRIGLSRERVRQVGL.

Belongs to the sigma-70 factor family. In terms of assembly, interacts with SIB1 in chloroplast. Binds to CSK. The phosphorylation of Thr-170 mediated by oxidative conditions of plastoquinone (PQ) changes the promoter specificity, selectively inhibiting the transcription of the psaA gene, which encodes a PS-I protein. Phosphorylation of the holoenzyme occurs in the dark. This phosphorylation in response to plastoquinone redox state modification is mediated by CSK. As to expression, highly expressed in leaves, and to a lesser extent in roots. Expressed in old seedlings (8 days), cotyledons, hypocotyls, leaves, sepals and siliques.

It localises to the plastid. It is found in the chloroplast. Functionally, essential protein. Sigma factors are initiation factors that promote the attachment of plastid-encoded RNA polymerase (PEP) to specific initiation sites and are then released. Controls the transcription of the psaA gene and thus modulates photosystem stoichiometry. Thereby maintains a harmonious electron flow and photosynthetic efficiency. The polypeptide is RNA polymerase sigma factor sigA (SIGA) (Arabidopsis thaliana (Mouse-ear cress)).